The chain runs to 276 residues: Sec-independent protein translocase protein TatC (276 aa).

The disordered stretch occupies residues 1–29; the sequence is MVSLTSVPPYADATPDTRASSGPAPGRRK. Helical transmembrane passes span 49–69, 103–123, 136–156, 187–207, 221–241, and 242–262; these read GGLV…LVLL, LFLA…AFVT, GFLG…WWVL, LVLA…LNLA, WAVL…DALT, and MVLV…VAVW.

Belongs to the TatC family. As to quaternary structure, the Tat system comprises two distinct complexes: a TatABC complex, containing multiple copies of TatA, TatB and TatC subunits, and a separate TatA complex, containing only TatA subunits. Substrates initially bind to the TatABC complex, which probably triggers association of the separate TatA complex to form the active translocon.

Its subcellular location is the cell membrane. Part of the twin-arginine translocation (Tat) system that transports large folded proteins containing a characteristic twin-arginine motif in their signal peptide across membranes. Together with TatB, TatC is part of a receptor directly interacting with Tat signal peptides. In Xylanimonas cellulosilytica (strain DSM 15894 / JCM 12276 / CECT 5975 / KCTC 9989 / LMG 20990 / NBRC 107835 / XIL07), this protein is Sec-independent protein translocase protein TatC.